A 117-amino-acid chain; its full sequence is MVTILIYLLILLIINVVLLLLGLIINKRSYSDREKNSPFECGFDPSIHTRAPFSMRFFLLAVIFLIFDVEIILLLPLTSNILNSNTHWPLTSSMIFLTILLIGLFHEWNQGSLDWMK.

3 consecutive transmembrane segments (helical) span residues 4 to 24, 57 to 77, and 88 to 108; these read ILIY…LGLI, FFLL…LLPL, and WPLT…FHEW.

Belongs to the complex I subunit 3 family.

Its subcellular location is the mitochondrion membrane. The enzyme catalyses a ubiquinone + NADH + 5 H(+)(in) = a ubiquinol + NAD(+) + 4 H(+)(out). Core subunit of the mitochondrial membrane respiratory chain NADH dehydrogenase (Complex I) that is believed to belong to the minimal assembly required for catalysis. Complex I functions in the transfer of electrons from NADH to the respiratory chain. The immediate electron acceptor for the enzyme is believed to be ubiquinone. This chain is NADH-ubiquinone oxidoreductase chain 3 (ND3), found in Heterololigo bleekeri (Spear squid).